Here is an 802-residue protein sequence, read N- to C-terminus: MKKKNIKNSMNNHTPMIKQYLSLKSQYPDMLLFYQMGDFYELFYEDAERISELLKITLTKKGYSNHKIIPMAGVPCHKSEYYLSKLVKLGESIAICDQQKETDCKKKLISRKVVRIITPGTVTDEVLLEENEDNFIAAIWKENNQFGYSVLDLSLGFFGVSKIFSSCDLLSEIERTNPKEILYPENFSDVFLIESRKCIRKRSLLEFDLETSYKLLNLQFNTCSLDGFGIEKNNFVIRAAGCLLQYVKSMNMTVLPNIRQLKYNYMEDSIFMNFSTRKSLEITQNISGEKKNTLSAILNKTVTSMGSRMLNRWLNSPLKNFKIVRNRHESVEALQFFYKELQFILRQVNDLERIYSRLALRTASPHDFVRMRSTLEILPNLHLILKKIKSKHIKKIRLSIGYFEEVLCLLKKAISLKPSKCIRDGGVIAELYNIELDELRSIKINSKEYIKNFEQKEKKKLMIESFKIKFNKIIGYYIQISKRHTHLIPKYYVIIQTLKNTERYSVPLLKEYEEKVLNSEMRSLLLEKKLYAEIFNIIEPFLEKLQNSALALSELDVLVNLSERAISLNYTRPIMSEKYGISLLESRHPVVECFLKTPFIKNSVFLSRTQRMIIITGPNMGGKSTYMRQIALIVIMAGIGSFVPARYALIGSIDKIFTRIGSADDLSNGYSTFMMEMMEISNILHNATSNSLVLIDELGRGTSTNEGLSLAWSCSRYLININKSMTLLSTHFVELTKLEEKEKFVKNFHFSAIKSDLHIAFLYKIKNGISKKSYGISVASLSGLPDSVLEDAEKKLIEIENT.

Residue 617 to 624 (GPNMGGKS) participates in ATP binding.

This sequence belongs to the DNA mismatch repair MutS family.

In terms of biological role, this protein is involved in the repair of mismatches in DNA. It is possible that it carries out the mismatch recognition step. This protein has a weak ATPase activity. The protein is DNA mismatch repair protein MutS of Buchnera aphidicola subsp. Acyrthosiphon pisum (strain Tuc7).